Reading from the N-terminus, the 542-residue chain is ATP synthase subunit alpha (542 aa).

Residue 173-180 participates in ATP binding; it reads GDRQTGKT. The tract at residues 518 to 542 is disordered; sequence PLVEKKPDEKHTTPVEQEKIVAGEK. Residues 519–542 show a composition bias toward basic and acidic residues; sequence LVEKKPDEKHTTPVEQEKIVAGEK.

It belongs to the ATPase alpha/beta chains family. In terms of assembly, F-type ATPases have 2 components, CF(1) - the catalytic core - and CF(0) - the membrane proton channel. CF(1) has five subunits: alpha(3), beta(3), gamma(1), delta(1), epsilon(1). CF(0) has three main subunits: a(1), b(2) and c(9-12). The alpha and beta chains form an alternating ring which encloses part of the gamma chain. CF(1) is attached to CF(0) by a central stalk formed by the gamma and epsilon chains, while a peripheral stalk is formed by the delta and b chains.

The protein resides in the cell membrane. The enzyme catalyses ATP + H2O + 4 H(+)(in) = ADP + phosphate + 5 H(+)(out). Functionally, produces ATP from ADP in the presence of a proton gradient across the membrane. The alpha chain is a regulatory subunit. In Bifidobacterium adolescentis (strain ATCC 15703 / DSM 20083 / NCTC 11814 / E194a), this protein is ATP synthase subunit alpha.